A 304-amino-acid polypeptide reads, in one-letter code: MLSRGKRLGYAAYERLLQWELSGTPDHVAVIMDGNRRYAEKQGTKKQEGHKEGAQTTEALLNWCDELGIREVTLYTFSTENFDRDPEEREHIFDLVEQKLRTFADADRVHEAGVCIRAIGETEMLPERVRDAIDYAEGRTAQYDQLNLNIALAYGGRAELLGAARDVAAAVENETLDPTDVSAETIEERLYEGPTRDVDLIVRTGGDERTSNFLPWHANGNEAATFFCTPYWPEFRKVDFLRAIRTYQNREDSWRTTRAERSLALVRAIEQSELPTAKRMLGRFRDALPSTEREQLDEEYDLAD.

The active site involves Asp33. Asp33 is a binding site for Mg(2+). Substrate contacts are provided by residues Gly34–Arg37, Lys46, His50, and Ser78–Glu80. The Proton acceptor role is filled by Asn81. Residues Phe82, Arg84, Arg203, and Arg209–Ser211 each bind substrate.

Belongs to the UPP synthase family. In terms of assembly, homodimer. It depends on Mg(2+) as a cofactor.

The enzyme catalyses geranylgeranyl diphosphate + 7 isopentenyl diphosphate = tri-trans,hepta-cis-undecaprenyl diphosphate + 7 diphosphate. Functionally, catalyzes the sequential condensation of isopentenyl diphosphate (IPP) with geranylgeranyl diphosphate (GGPP) to yield (2Z,6Z,10Z,14Z,18Z,22Z,26Z,30E,34E,38E)-undecaprenyl diphosphate (tritrans,heptacis-UPP). It is probably the precursor of glycosyl carrier lipids. This Haloarcula marismortui (strain ATCC 43049 / DSM 3752 / JCM 8966 / VKM B-1809) (Halobacterium marismortui) protein is Tritrans,polycis-undecaprenyl-diphosphate synthase (geranylgeranyl-diphosphate specific).